Reading from the N-terminus, the 255-residue chain is Undecaprenyl-diphosphatase (255 aa).

The next 6 helical transmembrane spans lie at 1–21, 75–95, 96–116, 174–194, 203–223, and 234–254; these read MDIIQVIVLSIIEGITEFLPI, IIISFIPVGIMGLLFHKIVYQ, LFTVQIVATAFIVGGIIFLIV, TEFSFLGALPVMLAASLFDIV, GDISNLVVGFIVSFFMALITI, and NFVPFGIYRILFGVILLMFFV.

It belongs to the UppP family.

The protein resides in the cell membrane. The catalysed reaction is di-trans,octa-cis-undecaprenyl diphosphate + H2O = di-trans,octa-cis-undecaprenyl phosphate + phosphate + H(+). Catalyzes the dephosphorylation of undecaprenyl diphosphate (UPP). The chain is Undecaprenyl-diphosphatase from Methanococcus aeolicus (strain ATCC BAA-1280 / DSM 17508 / OCM 812 / Nankai-3).